We begin with the raw amino-acid sequence, 323 residues long: Arginase (323 aa).

His119, Asp142, His144, and Asp146 together coordinate Mn(2+). Residues 144–148, 155–157, and Asp198 contribute to the substrate site; these read HADIN and SKN. Mn(2+)-binding residues include Asp247 and Asp249. 2 residues coordinate substrate: Thr261 and Glu292.

This sequence belongs to the arginase family. As to quaternary structure, homotrimer. Mn(2+) is required as a cofactor.

The enzyme catalyses L-arginine + H2O = urea + L-ornithine. The protein operates within nitrogen metabolism; urea cycle; L-ornithine and urea from L-arginine: step 1/1. The protein is Arginase (aru1) of Schizosaccharomyces pombe (strain 972 / ATCC 24843) (Fission yeast).